A 90-amino-acid polypeptide reads, in one-letter code: CRISPR-associated endonuclease Cas2 2 (90 aa).

Asp-11 provides a ligand contact to Mg(2+).

It belongs to the CRISPR-associated endoribonuclease Cas2 protein family. In terms of assembly, homodimer, forms a heterotetramer with a Cas1 homodimer. It depends on Mn(2+) as a cofactor. The cofactor is Mg(2+).

Its activity is regulated as follows. Inhibited by EDTA and at pH 6.0. In terms of biological role, CRISPR (clustered regularly interspaced short palindromic repeat), is an adaptive immune system that provides protection against mobile genetic elements (viruses, transposable elements and conjugative plasmids). CRISPR clusters contain sequences complementary to antecedent mobile elements and target invading nucleic acids. CRISPR clusters are transcribed and processed into CRISPR RNA (crRNA). Involved in the integration of spacer DNA into the CRISPR cassette. Functions as a dsDNA endonuclease and as a weak ssRNase. The polypeptide is CRISPR-associated endonuclease Cas2 2 (cas2b) (Thermus thermophilus (strain ATCC BAA-163 / DSM 7039 / HB27)).